Reading from the N-terminus, the 137-residue chain is Histone H2B (137 aa).

Residues M1–P10 are compositionally biased toward basic and acidic residues. The interval M1–K45 is disordered. 2 positions are modified to N6-acetyllysine; alternate: K8 and K9. Glycyl lysine isopeptide (Lys-Gly) (interchain with G-Cter in SUMO); alternate cross-links involve residues K8 and K9. S12 bears the Phosphoserine mark. An N6-acetyllysine modification is found at K13. K24 is modified (N6-acetyllysine; alternate). K24 participates in a covalent cross-link: Glycyl lysine isopeptide (Lys-Gly) (interchain with G-Cter in SUMO); alternate. Residue K25 forms a Glycyl lysine isopeptide (Lys-Gly) (interchain with G-Cter in SUMO) linkage. K131 is covalently cross-linked (Glycyl lysine isopeptide (Lys-Gly) (interchain with G-Cter in ubiquitin)).

It belongs to the histone H2B family. In terms of assembly, the nucleosome is a histone octamer containing two molecules each of H2A, H2B, H3 and H4 assembled in one H3-H4 heterotetramer and two H2A-H2B heterodimers. The octamer wraps approximately 147 bp of DNA. In terms of processing, monoubiquitinated by the UBC2-BRE1 complex to form H2BK123ub1. H2BK123ub1 gives a specific tag for epigenetic transcriptional activation and is also prerequisite for H3K4me and H3K79me formation. H2BK123ub1 also modulates the formation of double-strand breaks during meiosis and is a prerequisite for DNA-damage checkpoint activation. Post-translationally, phosphorylated to form H2BS10ph during progression through meiotic prophase. May be correlated with chromosome condensation. Acetylated by GCN5 to form H2BK11ac and H2BK16ac. H2BK16ac can also be formed by ESA1. Acetylation of N-terminal lysines and particularly formation of H2BK11acK16ac has a positive effect on transcription. In terms of processing, sumoylation to form H2BK6su or H2BK7su, and probably also H2BK16su or H2BK17su, occurs preferentially near the telomeres and represses gene transcription.

Its subcellular location is the nucleus. It localises to the chromosome. Functionally, core component of nucleosome. Nucleosomes wrap and compact DNA into chromatin, limiting DNA accessibility to the cellular machineries which require DNA as a template. Histones thereby play a central role in transcription regulation, DNA repair, DNA replication and chromosomal stability. DNA accessibility is regulated via a complex set of post-translational modifications of histones, also called histone code, and nucleosome remodeling. In Chaetomium globosum (strain ATCC 6205 / CBS 148.51 / DSM 1962 / NBRC 6347 / NRRL 1970) (Soil fungus), this protein is Histone H2B (HTB1).